The sequence spans 1823 residues: Laminin subunit alpha-4 (1823 aa).

The N-terminal stretch at 1 to 24 (MALSSAWRSVLPLWLLWSAACSRA) is a signal peptide. Serine 39 carries an O-linked (Xyl...) (chondroitin sulfate) serine glycan. 12 disulfides stabilise this stretch: cysteine 82-cysteine 91, cysteine 84-cysteine 98, cysteine 101-cysteine 110, cysteine 113-cysteine 129, cysteine 132-cysteine 146, cysteine 134-cysteine 155, cysteine 157-cysteine 166, cysteine 169-cysteine 184, cysteine 187-cysteine 202, cysteine 189-cysteine 209, cysteine 212-cysteine 221, and cysteine 224-cysteine 238. Laminin EGF-like domains are found at residues 82–131 (CDCN…FCQP), 132–186 (CPCP…TCKK), and 187–240 (CDCS…NCAV). A glycan (N-linked (GlcNAc...) asparagine) is linked at asparagine 104. Asparagine 215 carries an N-linked (GlcNAc...) asparagine glycan. The 15-residue stretch at 241 to 255 (CNCGGGPCDSVTGEC) folds into the Laminin EGF-like 4; truncated domain. A domain II and I region spans residues 256–832 (LEEGFEPPTG…AQTRSVASKI (577 aa)). Residue asparagine 315 is glycosylated (N-linked (GlcNAc...) asparagine). Residues 320–403 (LLKTKLSERE…KIQEINNKML (84 aa)) adopt a coiled-coil conformation. Asparagine 465 carries an N-linked (GlcNAc...) asparagine glycan. Residues 473 to 528 (VVLEQLDDYNAKLSDLQEALDQALNYVRDAEDMNRATAARQRDHEKQQERVREQME) adopt a coiled-coil conformation. 6 N-linked (GlcNAc...) asparagine glycosylation sites follow: asparagine 531, asparagine 557, asparagine 578, asparagine 581, asparagine 638, and asparagine 646. A coiled-coil region spans residues 581–614 (NLSHDLVQEAIDHAQDLQQEANELSRKLHSSDMN). Residues 662-724 (IIYHKDESEN…AVKQLQAAER (63 aa)) adopt a coiled-coil conformation. A Cell attachment site motif is present at residues 724–726 (RGD). N-linked (GlcNAc...) asparagine glycosylation is found at asparagine 742, asparagine 758, asparagine 761, asparagine 787, and asparagine 810. A coiled-coil region spans residues 777 to 806 (AVNSARDAVRNLTEVVPQLLDQLRTVEQKR). Laminin G-like domains follow at residues 833-1035 (QVSM…SVPC), 1047-1227 (AASY…GYGC), and 1234-1402 (SRRA…LYEC). Cysteines 1005 and 1035 form a disulfide. The N-linked (GlcNAc...) asparagine glycan is linked to asparagine 1093. Cysteine 1201 and cysteine 1227 are disulfide-bonded. Asparagine 1288 and asparagine 1366 each carry an N-linked (GlcNAc...) asparagine glycan. Cysteine 1370 and cysteine 1402 are joined by a disulfide. A glycan (N-linked (GlcNAc...) asparagine) is linked at asparagine 1418. Residues 1419–1440 (LSKPKASQNKKGGKSKDAPSWD) form a disordered region. Laminin G-like domains are found at residues 1469 to 1640 (AYQY…VTPC) and 1647 to 1820 (TGTY…INSC). 2 cysteine pairs are disulfide-bonded: cysteine 1617/cysteine 1640 and cysteine 1792/cysteine 1820.

Laminin is a complex glycoprotein, consisting of three different polypeptide chains (alpha, beta, gamma), which are bound to each other by disulfide bonds into a cross-shaped molecule comprising one long and three short arms with globules at each end. Alpha-4 is a subunit of laminin-8 (laminin-411), laminin-9 (laminin-421) and laminin-14 (laminin-423). In terms of tissue distribution, detected in placenta (at protein level). Detected in fibroblasts and urine (at protein level). In adult, strong expression in heart, lung, ovary small and large intestines, placenta, liver; weak or no expression in skeletal muscle, kidney, pancreas, testis, prostate, brain. High expression in fetal lung and kidney. Expression in fetal and newborn tissues is observed in certain mesenchymal cells in tissues such as smooth muscle and dermis.

The protein localises to the secreted. It is found in the extracellular space. The protein resides in the extracellular matrix. Its subcellular location is the basement membrane. In terms of biological role, binding to cells via a high affinity receptor, laminin is thought to mediate the attachment, migration and organization of cells into tissues during embryonic development by interacting with other extracellular matrix components. The sequence is that of Laminin subunit alpha-4 (LAMA4) from Homo sapiens (Human).